The primary structure comprises 153 residues: ATP synthase subunit b' (153 aa).

The helical transmembrane segment at Leu23–Phe40 threads the bilayer.

The protein belongs to the ATPase B chain family. As to quaternary structure, F-type ATPases have 2 components, F(1) - the catalytic core - and F(0) - the membrane proton channel. F(1) has five subunits: alpha(3), beta(3), gamma(1), delta(1), epsilon(1). F(0) has four main subunits: a(1), b(1), b'(1) and c(10-14). The alpha and beta chains form an alternating ring which encloses part of the gamma chain. F(1) is attached to F(0) by a central stalk formed by the gamma and epsilon chains, while a peripheral stalk is formed by the delta, b and b' chains.

It localises to the cellular thylakoid membrane. Functionally, f(1)F(0) ATP synthase produces ATP from ADP in the presence of a proton or sodium gradient. F-type ATPases consist of two structural domains, F(1) containing the extramembraneous catalytic core and F(0) containing the membrane proton channel, linked together by a central stalk and a peripheral stalk. During catalysis, ATP synthesis in the catalytic domain of F(1) is coupled via a rotary mechanism of the central stalk subunits to proton translocation. In terms of biological role, component of the F(0) channel, it forms part of the peripheral stalk, linking F(1) to F(0). The b'-subunit is a diverged and duplicated form of b found in plants and photosynthetic bacteria. This Prochlorococcus marinus (strain AS9601) protein is ATP synthase subunit b'.